We begin with the raw amino-acid sequence, 346 residues long: Elongation factor Ts (346 aa).

Residues 80-83 (TDFV) form an involved in Mg(2+) ion dislocation from EF-Tu region.

Belongs to the EF-Ts family.

It localises to the cytoplasm. In terms of biological role, associates with the EF-Tu.GDP complex and induces the exchange of GDP to GTP. It remains bound to the aminoacyl-tRNA.EF-Tu.GTP complex up to the GTP hydrolysis stage on the ribosome. The polypeptide is Elongation factor Ts (Streptococcus pyogenes serotype M3 (strain ATCC BAA-595 / MGAS315)).